The chain runs to 219 residues: Small ribosomal subunit protein uS3c (219 aa).

The region spanning I47 to L118 is the KH type-2 domain.

It belongs to the universal ribosomal protein uS3 family. In terms of assembly, part of the 30S ribosomal subunit.

The protein resides in the plastid. The protein localises to the chloroplast. The sequence is that of Small ribosomal subunit protein uS3c (rps3) from Chara vulgaris (Common stonewort).